Here is a 307-residue protein sequence, read N- to C-terminus: tRNA pseudouridine synthase B (307 aa).

D41 functions as the Nucleophile in the catalytic mechanism.

Belongs to the pseudouridine synthase TruB family. Type 1 subfamily.

The enzyme catalyses uridine(55) in tRNA = pseudouridine(55) in tRNA. Responsible for synthesis of pseudouridine from uracil-55 in the psi GC loop of transfer RNAs. The sequence is that of tRNA pseudouridine synthase B from Prochlorococcus marinus (strain AS9601).